We begin with the raw amino-acid sequence, 1178 residues long: Pyruvate carboxylase, mitochondrial (1178 aa).

A mitochondrion-targeting transit peptide spans 1-20 (MLKFRTVHGGLRLLGIRRTS). Lys-35 and Lys-39 each carry N6-acetyllysine. Residues 36-486 (PIKKVMVANR…DTQFIDENPE (451 aa)) form the Biotin carboxylation domain. Lys-79 is subject to N6-acetyllysine; alternate. Lys-79 carries the post-translational modification N6-succinyllysine; alternate. An N6-acetyllysine mark is found at Lys-148 and Lys-152. 2 residues coordinate ATP: Lys-152 and Glu-236. The region spanning 156–353 (RAIAIAAGVP…LVHAQIHVAE (198 aa)) is the ATP-grasp domain. Position 241 is an N6-acetyllysine (Lys-241). ATP is bound at residue His-271. 2 positions are modified to N6-acetyllysine: Lys-297 and Lys-319. Arg-328 is an active-site residue. Position 434 is an N6-acetyllysine (Lys-434). The residue at position 442 (Lys-442) is an N6-succinyllysine. The Pyruvate carboxyltransferase domain occupies 563-832 (LLLMDTTFRD…DTEVPMERVF (270 aa)). Position 571 to 575 (571 to 575 (RDAHQ)) interacts with substrate. A Mn(2+)-binding site is contributed by Asp-572. Lys-589 is subject to N6-acetyllysine. Arg-644 lines the substrate pocket. Residues Lys-661 and Lys-717 each carry the N6-acetyllysine modification. Residue Lys-741 participates in Mn(2+) binding. At Lys-741 the chain carries N6-carboxylysine. Lys-748 is modified (N6-acetyllysine). His-771 and His-773 together coordinate Mn(2+). Lys-892 carries the N6-acetyllysine modification. Thr-908 is a binding site for substrate. An N6-acetyllysine mark is found at Lys-969 and Lys-992. Thr-1003 is subject to Phosphothreonine. Residues Lys-1061, Lys-1090, and Lys-1124 each carry the N6-acetyllysine modification. In terms of domain architecture, Biotinyl-binding spans 1109 to 1178 (KGQIGAPMPG…EGDDLILEIE (70 aa)). At Lys-1144 the chain carries N6-biotinyllysine.

Homotetramer. Interacts (via the biotin carboxylation domain) with SIRT4. Biotin serves as cofactor. It depends on Mn(2+) as a cofactor. Post-translationally, acetylation of Lys-748 might play a role in catalytic activity regulation.

The protein localises to the mitochondrion matrix. The enzyme catalyses hydrogencarbonate + pyruvate + ATP = oxaloacetate + ADP + phosphate + H(+). It participates in carbohydrate biosynthesis; gluconeogenesis. In terms of biological role, pyruvate carboxylase catalyzes a 2-step reaction, involving the ATP-dependent carboxylation of the covalently attached biotin in the first step and the transfer of the carboxyl group to pyruvate in the second. Catalyzes in a tissue specific manner, the initial reactions of glucose (liver, kidney) and lipid (adipose tissue, liver, brain) synthesis from pyruvate. The sequence is that of Pyruvate carboxylase, mitochondrial from Homo sapiens (Human).